A 413-amino-acid chain; its full sequence is PCI domain-containing protein 2 homolog (413 aa).

The PCI domain maps to 222-403 (VAYNYFLGRK…QKLVISKTNA (182 aa)).

The protein belongs to the CSN12 family.

This is PCI domain-containing protein 2 homolog from Caenorhabditis briggsae.